The sequence spans 97 residues: ESAT-6-like protein EsxS (97 aa).

This sequence belongs to the WXG100 family. CFP-10 subfamily. As to quaternary structure, forms a tight complex with EsxR. Exists in heterodimeric and heterotetrameric forms.

It is found in the secreted. This is ESAT-6-like protein EsxS from Mycobacterium tuberculosis (strain ATCC 25618 / H37Rv).